A 3005-amino-acid chain; its full sequence is Highly reducing polyketide synthase AFT9-1 (3005 aa).

A Ketosynthase family 3 (KS3) domain is found at 1–337; the sequence is MDPQQRLLLE…GTNAHAILER (337 aa). Active-site for beta-ketoacyl synthase activity residues include C87, H222, and H260. The malonyl-CoA:ACP transacylase (MAT) domain stretch occupies residues 437–751; that stretch reads VFTGQGAQWP…SYMSALVRGS (315 aa). Residues 821–936 form an N-terminal hotdog fold region; sequence HDLLGLKMTD…GSVEVKYAAA (116 aa). Residues 821-1114 are dehydratase (DH) domain; that stretch reads HDLLGLKMTD…SGLELRRLAP (294 aa). The PKS/mFAS DH domain occupies 821 to 1118; it reads HDLLGLKMTD…LRRLAPTGQP (298 aa). Residue H853 is the Proton acceptor; for dehydratase activity of the active site. Residues 963–1118 are C-terminal hotdog fold; sequence IEKISSQELY…LRRLAPTGQP (156 aa). D1028 functions as the Proton donor; for dehydratase activity in the catalytic mechanism. Positions 1259 to 1445 are methyltransferase (CMet) domain; it reads ADDSSKRCYD…MRKASLNMQL (187 aa). The tract at residues 1683–1985 is enoyl reductase (ER) (ER) domain; it reads EFMKMPVFTE…QHHRNESTVL (303 aa). A ketoreductase (KR) domain region spans residues 2008–2191; the sequence is ATYVVSGGRG…YMSLNVGTIE (184 aa). Residues 2293–2375 enclose the Carrier domain; that stretch reads TRDFEKISQL…SLGAKVASRS (83 aa). S2335 carries the O-(pantetheine 4'-phosphoryl)serine modification.

It participates in mycotoxin biosynthesis. In terms of biological role, highly reducing polyketide synthase; part of the gene clusters that mediate the biosynthesis of the host-selective toxins (HSTs) AF-toxins responsible for Alternaria black spot of strawberry disease by the strawberry pathotype. AF-toxin I and III are valine derivatives of 2,3-dyhydroxy-isovaleric acid and 2-hydroxy-isovaleric acid respectively, while AF II is an isoleucine derivative of 2-hydroxy-valeric acid. These derivatives are bound to a 9,10-epoxy-8-hydroxy-9-methyl-decatrienoic acid (EDA) moiety. On cellular level, AF-toxins affect plasma membrane of susceptible cells and cause a sudden increase in loss of K(+) after a few minutes of toxin treatment. The aldo-keto reductase AFTS1 catalyzes the conversion of 2-keto-isovaleric acid (2-KIV) to 2-hydroxy-isovaleric acid (2-HIV) by reduction of its ketone to an alcohol. The acyl-CoA ligase AFT1, the hydrolase AFT2 and the enoyl-CoA hydratases AFT3 and AFT6, but also the polyketide synthase AFT9, the acyl-CoA dehydrogenase AFT10, the cytochrome P450 monooxygenase AFT11 and the oxidoreductase AFT12 are all involved in the biosynthesis of the AK-, AF- and ACT-toxin common EDA structural moiety. The exact function of each enzyme, and of additional enzymes identified within the AF-toxin clusters have still to be determined. This chain is Highly reducing polyketide synthase AFT9-1, found in Alternaria alternata (Alternaria rot fungus).